We begin with the raw amino-acid sequence, 336 residues long: MPQPSRPRKGSMGFSPRSRAASEVPRFNSWPDDEGQPGLQGFAGYKAGMSHVVAINDEPNSPREGQEETVPVTVVETPPMRAVAVRAYEDTPYGKRPLTEVWTDEVHEDLERSLSVPEEQSGDIEGDIRTALDEGALADVRVITHTVPGALSSVPKKEPDVMETRVGGGSLSDRVDFALDLVDDGGEHTVTDVFRAGEYTDVAGITKGKGTQGPVKRWGVQKRKGKHARQGWRRRIGNLGPWNPSRVRSTVPQQGQTGYHQRTELNKRLIDLGDDDVSPDGGFVNYGEVDGPYALVKGSVPGPDKRLVRFRPAVRPGDQPRLDPEVRYVSTASNQG.

3 disordered regions span residues methionine 1 to alanine 43, isoleucine 205 to glutamine 230, and arginine 311 to glycine 336. Residues glycine 219–glutamine 230 show a composition bias toward basic residues.

Belongs to the universal ribosomal protein uL3 family. As to quaternary structure, part of the 50S ribosomal subunit. Forms a cluster with proteins L14 and L24e.

One of the primary rRNA binding proteins, it binds directly near the 3'-end of the 23S rRNA, where it nucleates assembly of the 50S subunit. The sequence is that of Large ribosomal subunit protein uL3 from Natronomonas pharaonis (strain ATCC 35678 / DSM 2160 / CIP 103997 / JCM 8858 / NBRC 14720 / NCIMB 2260 / Gabara) (Halobacterium pharaonis).